The chain runs to 73 residues: uncharacterized protein (73 aa).

A signal peptide spans 1–23; it reads MLHLIKMVSKIVLLITLVFIVSA.

This is an uncharacterized protein from Acheta domesticus (House cricket).